A 174-amino-acid polypeptide reads, in one-letter code: Large ribosomal subunit protein uL10 (174 aa).

This sequence belongs to the universal ribosomal protein uL10 family. Part of the ribosomal stalk of the 50S ribosomal subunit. The N-terminus interacts with L11 and the large rRNA to form the base of the stalk. The C-terminus forms an elongated spine to which L12 dimers bind in a sequential fashion forming a multimeric L10(L12)X complex.

Functionally, forms part of the ribosomal stalk, playing a central role in the interaction of the ribosome with GTP-bound translation factors. In Nitrosospira multiformis (strain ATCC 25196 / NCIMB 11849 / C 71), this protein is Large ribosomal subunit protein uL10.